We begin with the raw amino-acid sequence, 202 residues long: Nucleoside triphosphate pyrophosphatase (202 aa).

The Proton acceptor role is filled by D79.

This sequence belongs to the Maf family. A divalent metal cation is required as a cofactor.

It is found in the cytoplasm. The enzyme catalyses a ribonucleoside 5'-triphosphate + H2O = a ribonucleoside 5'-phosphate + diphosphate + H(+). The catalysed reaction is a 2'-deoxyribonucleoside 5'-triphosphate + H2O = a 2'-deoxyribonucleoside 5'-phosphate + diphosphate + H(+). Functionally, nucleoside triphosphate pyrophosphatase. May have a dual role in cell division arrest and in preventing the incorporation of modified nucleotides into cellular nucleic acids. In Bradyrhizobium diazoefficiens (strain JCM 10833 / BCRC 13528 / IAM 13628 / NBRC 14792 / USDA 110), this protein is Nucleoside triphosphate pyrophosphatase.